The following is a 294-amino-acid chain: Pyridoxal 5'-phosphate synthase subunit PdxS (294 aa).

Residue D24 participates in D-ribose 5-phosphate binding. Residue K81 is the Schiff-base intermediate with D-ribose 5-phosphate of the active site. G153 contacts D-ribose 5-phosphate. R165 is a binding site for D-glyceraldehyde 3-phosphate. D-ribose 5-phosphate is bound by residues G214 and 235–236 (GS).

The protein belongs to the PdxS/SNZ family. As to quaternary structure, in the presence of PdxT, forms a dodecamer of heterodimers.

The catalysed reaction is aldehydo-D-ribose 5-phosphate + D-glyceraldehyde 3-phosphate + L-glutamine = pyridoxal 5'-phosphate + L-glutamate + phosphate + 3 H2O + H(+). The protein operates within cofactor biosynthesis; pyridoxal 5'-phosphate biosynthesis. Functionally, catalyzes the formation of pyridoxal 5'-phosphate from ribose 5-phosphate (RBP), glyceraldehyde 3-phosphate (G3P) and ammonia. The ammonia is provided by the PdxT subunit. Can also use ribulose 5-phosphate and dihydroxyacetone phosphate as substrates, resulting from enzyme-catalyzed isomerization of RBP and G3P, respectively. In Bacillus licheniformis (strain ATCC 14580 / DSM 13 / JCM 2505 / CCUG 7422 / NBRC 12200 / NCIMB 9375 / NCTC 10341 / NRRL NRS-1264 / Gibson 46), this protein is Pyridoxal 5'-phosphate synthase subunit PdxS.